The primary structure comprises 378 residues: Erythronate-4-phosphate dehydrogenase (378 aa).

Substrate contacts are provided by Ser-45 and Thr-66. Residues Asp-146 and Thr-175 each contribute to the NAD(+) site. Residue Arg-208 is part of the active site. NAD(+) is bound at residue Asp-232. Glu-237 is a catalytic residue. The active-site Proton donor is the His-254. Residue Gly-257 coordinates NAD(+). Tyr-258 contacts substrate.

It belongs to the D-isomer specific 2-hydroxyacid dehydrogenase family. PdxB subfamily. As to quaternary structure, homodimer.

It localises to the cytoplasm. It catalyses the reaction 4-phospho-D-erythronate + NAD(+) = (R)-3-hydroxy-2-oxo-4-phosphooxybutanoate + NADH + H(+). It functions in the pathway cofactor biosynthesis; pyridoxine 5'-phosphate biosynthesis; pyridoxine 5'-phosphate from D-erythrose 4-phosphate: step 2/5. In terms of biological role, catalyzes the oxidation of erythronate-4-phosphate to 3-hydroxy-2-oxo-4-phosphonooxybutanoate. The protein is Erythronate-4-phosphate dehydrogenase of Escherichia coli O127:H6 (strain E2348/69 / EPEC).